Here is a 235-residue protein sequence, read N- to C-terminus: Endonuclease V (235 aa).

Mg(2+) contacts are provided by Asp-45 and Asp-115.

This sequence belongs to the endonuclease V family. The cofactor is Mg(2+).

It localises to the cytoplasm. It catalyses the reaction Endonucleolytic cleavage at apurinic or apyrimidinic sites to products with a 5'-phosphate.. In terms of biological role, DNA repair enzyme involved in the repair of deaminated bases. Selectively cleaves double-stranded DNA at the second phosphodiester bond 3' to a deoxyinosine leaving behind the intact lesion on the nicked DNA. This is Endonuclease V from Bacillus thuringiensis subsp. konkukian (strain 97-27).